We begin with the raw amino-acid sequence, 296 residues long: Large ribosomal subunit protein uL15m (296 aa).

Residues 1-20 (MSLIKKPGGKTIEVVKNLPR) constitute a mitochondrion transit peptide. The interval 25-59 (NLRPNPGAKTLEKRRGRGMHGGNRSGWGHKGERQR) is disordered.

This sequence belongs to the universal ribosomal protein uL15 family. In terms of assembly, component of the mitochondrial ribosome large subunit (39S) which comprises a 16S rRNA and about 50 distinct proteins.

Its subcellular location is the mitochondrion. The chain is Large ribosomal subunit protein uL15m (mrpl15) from Danio rerio (Zebrafish).